A 133-amino-acid chain; its full sequence is Classical arabinogalactan protein 5 (133 aa).

The first 21 residues, 1–21, serve as a signal peptide directing secretion; the sequence is MASKSVVVFLFLALVASSVVA. Residue glutamine 22 is modified to Pyrrolidone carboxylic acid. A disordered region spans residues 23–110; the sequence is APGPAPTISP…QSPLSGSPNA (88 aa). The span at 25–37 shows a compositional bias: pro residues; it reads GPAPTISPLPATP. Positions 38–48 are enriched in low complexity; sequence TPSQSPRATAP. The segment covering 49-81 has biased composition (pro residues); it reads APSPSANPPPSAPTTAPPVSQPPTESPPAPPTS. A lipid anchor (GPI-anchor amidated asparagine) is attached at asparagine 109. The propeptide at 110 to 133 is removed in mature form; that stretch reads AAAVSRVSLVGTFAGVAVIAALLL.

This sequence belongs to the classical AGP family. Post-translationally, O-glycosylated on the hydroxyproline residues. Expressed at a low level in flowers and siliques.

The protein resides in the cell membrane. Functionally, proteoglycan that seems to be implicated in diverse developmental roles such as differentiation, cell-cell recognition, embryogenesis and programmed cell death. The chain is Classical arabinogalactan protein 5 (AGP5) from Arabidopsis thaliana (Mouse-ear cress).